Consider the following 102-residue polypeptide: Small ribosomal subunit protein uS10 (102 aa).

The protein belongs to the universal ribosomal protein uS10 family. In terms of assembly, part of the 30S ribosomal subunit.

Its function is as follows. Involved in the binding of tRNA to the ribosomes. The chain is Small ribosomal subunit protein uS10 from Bartonella tribocorum (strain CIP 105476 / IBS 506).